The sequence spans 704 residues: MARTTPIARYRNIGISAHIDAGKTTTTERILFYTGVNHKIGEVHDGAATMDWMEQEQERGITITSAATTAFWSGMAKQYEPHRINIIDTPGHVDFTIEVERSMRVLDGAVMVYCAVGGVQPQSETVWRQANKYKVPRIAFVNKMDRMGANFLKVVGQIKTRLGANPVPLQLAIGAEEGFTGVVDLVKMKAINWNDADQGVTFEYEDIPADMQDLANEWHQNLIESAAEASEELMEKYLGGEELTEEEIKQALRQRVLNNEIILVTCGSAFKNKGVQAMLDAVIDYLPSPVDVPAINGILDDGKDTPAERHASDDEPFSALAFKIATDPFVGNLTFFRVYSGVVNSGDTVLNSVKTARERFGRIVQMHANKREEIKEVRAGDIAAAIGLKDVTTGDTLCDPENPIILERMEFPEPVISIAVEPKTKADQEKMGLALGRLAKEDPSFRVWTDEESNQTIIAGMGELHLDIIVDRMKREFNVEANVGKPQVAYREAIRAKVTDIEGKHAKQSGGRGQYGHVVIDMYPLEPGSNPKGYEFINDIKGGVIPGEYIPAVDKGIQEQLKSGPLAGYPVVDLGVRLHFGSYHDVDSSELAFKLAASIAFKEGFKKAKPVLLEPIMKVEVETPEENTGDVIGDLSRRRGMLKGQESEVTGVKIHAEVPLSEMFGYATQLRSLTKGRASYTMEFLKYDDAPNNVAQAVIEARGK.

Positions Ala-8–Val-290 constitute a tr-type G domain. Residues Ala-17–Thr-24, Asp-88–His-92, and Asn-142–Asp-145 each bind GTP.

It belongs to the TRAFAC class translation factor GTPase superfamily. Classic translation factor GTPase family. EF-G/EF-2 subfamily.

It is found in the cytoplasm. Functionally, catalyzes the GTP-dependent ribosomal translocation step during translation elongation. During this step, the ribosome changes from the pre-translocational (PRE) to the post-translocational (POST) state as the newly formed A-site-bound peptidyl-tRNA and P-site-bound deacylated tRNA move to the P and E sites, respectively. Catalyzes the coordinated movement of the two tRNA molecules, the mRNA and conformational changes in the ribosome. This chain is Elongation factor G, found in Salmonella agona (strain SL483).